The following is a 69-amino-acid chain: UPF0337 protein XAC4007 (69 aa).

This sequence belongs to the UPF0337 (CsbD) family.

The sequence is that of UPF0337 protein XAC4007 from Xanthomonas axonopodis pv. citri (strain 306).